We begin with the raw amino-acid sequence, 208 residues long: Small ribosomal subunit protein uS4 (208 aa).

The 64-residue stretch at 98-161 folds into the S4 RNA-binding domain; that stretch reads RRLDNVIYRL…KESPRIKELL (64 aa).

The protein belongs to the universal ribosomal protein uS4 family. Part of the 30S ribosomal subunit. Contacts protein S5. The interaction surface between S4 and S5 is involved in control of translational fidelity.

One of the primary rRNA binding proteins, it binds directly to 16S rRNA where it nucleates assembly of the body of the 30S subunit. Its function is as follows. With S5 and S12 plays an important role in translational accuracy. The sequence is that of Small ribosomal subunit protein uS4 from Pelotomaculum thermopropionicum (strain DSM 13744 / JCM 10971 / SI).